The primary structure comprises 391 residues: Phosphoglycerate kinase (391 aa).

Residues 21–23 (DLN), Arg-36, 59–62 (HLGR), Arg-113, and Arg-146 each bind substrate. Residues Lys-197, Glu-319, and 345-348 (GGDT) contribute to the ATP site.

It belongs to the phosphoglycerate kinase family. Monomer.

The protein localises to the cytoplasm. The enzyme catalyses (2R)-3-phosphoglycerate + ATP = (2R)-3-phospho-glyceroyl phosphate + ADP. Its pathway is carbohydrate degradation; glycolysis; pyruvate from D-glyceraldehyde 3-phosphate: step 2/5. In Xanthomonas oryzae pv. oryzae (strain MAFF 311018), this protein is Phosphoglycerate kinase.